We begin with the raw amino-acid sequence, 120 residues long: Large ribosomal subunit protein uL18 (120 aa).

Part of the 50S ribosomal subunit; part of the 5S rRNA/L5/L18/L25 subcomplex. Contacts the 5S and 23S rRNAs.

In terms of biological role, this is one of the proteins that bind and probably mediate the attachment of the 5S RNA into the large ribosomal subunit, where it forms part of the central protuberance. This chain is Large ribosomal subunit protein uL18, found in Rhodopseudomonas palustris (strain ATCC BAA-98 / CGA009).